A 381-amino-acid chain; its full sequence is MNPLQTGPWQTSAPSFWLLKFSFIWLVSQNCCTASAVWTAYMNISFHVGNRMLSELGETGVFGRSSILKRVAGVVVPPEGKIQNACDPNTSFILPRNKEPWIALIERGGCAFTQKIKVASENGARGVIIYNFPGTGNQVFPMSHQAFEDIVVVMIGNVKGMEILHLIRKGVHVTVMVEVGRKHVIWLNHYFVSFMIVTTATLAYFTFYHIRRLWVARIEDRRWKRLTRELKKAFGQLQVRILKEGDEEVSPNADSCVICFEAYKPNEIVRILTCKHFFHKNCIDPWILAHGTCPMCKCDILKALGIQMDIEDGSDSLQVLMSNELPGTFSAMEEELNNELPPARTSSKVTHVQEHPTSVNVGSQPPEAEETGHPSFGQHDL.

A PA domain is found at 65-167 (SSILKRVAGV…VKGMEILHLI (103 aa)). The chain crosses the membrane as a helical span at residues 186-208 (WLNHYFVSFMIVTTATLAYFTFY). The RING-type; atypical zinc finger occupies 256 to 297 (CVICFEAYKPNEIVRILTCKHFFHKNCIDPWILAHGTCPMCK). Positions 340–381 (LPPARTSSKVTHVQEHPTSVNVGSQPPEAEETGHPSFGQHDL) are disordered. Polar residues predominate over residues 344–363 (RTSSKVTHVQEHPTSVNVGS).

In terms of assembly, interacts with E3 ligase UBE2J1. Auto-ubiquitinated.

The protein resides in the endoplasmic reticulum membrane. It catalyses the reaction S-ubiquitinyl-[E2 ubiquitin-conjugating enzyme]-L-cysteine + [acceptor protein]-L-lysine = [E2 ubiquitin-conjugating enzyme]-L-cysteine + N(6)-ubiquitinyl-[acceptor protein]-L-lysine.. Its pathway is protein modification; protein ubiquitination. Has E3 ubiquitin-protein ligase activity. Plays a role in male fecundity through the interaction with the E2 ubituitin-protein ligase UBE2J1. This chain is E3 ubiquitin-protein ligase RNF133 (Rnf133), found in Rattus norvegicus (Rat).